A 438-amino-acid chain; its full sequence is GTPase Obg (438 aa).

Residues 2–160 (NMFVDQIKIE…HYLELELKML (159 aa)) enclose the Obg domain. Residues 161–337 (ADVGLIGFPS…LMQLTADLLD (177 aa)) form the OBG-type G domain. GTP-binding positions include 167–174 (GFPSVGKS), 192–196 (FTTLT), 214–217 (DMPG), 284–287 (TKMD), and 318–320 (SAV). Mg(2+)-binding residues include S174 and T194. Residues 360-438 (PDKKDEADFT…IEKFVFEFIQ (79 aa)) enclose the OCT domain.

It belongs to the TRAFAC class OBG-HflX-like GTPase superfamily. OBG GTPase family. In terms of assembly, monomer. Mg(2+) is required as a cofactor.

Its subcellular location is the cytoplasm. Its function is as follows. An essential GTPase which binds GTP, GDP and possibly (p)ppGpp with moderate affinity, with high nucleotide exchange rates and a fairly low GTP hydrolysis rate. Plays a role in control of the cell cycle, stress response, ribosome biogenesis and in those bacteria that undergo differentiation, in morphogenesis control. The protein is GTPase Obg of Limosilactobacillus reuteri (strain DSM 20016) (Lactobacillus reuteri).